A 313-amino-acid polypeptide reads, in one-letter code: Porphobilinogen deaminase (313 aa).

Cys242 bears the S-(dipyrrolylmethanemethyl)cysteine mark.

It belongs to the HMBS family. In terms of assembly, monomer. Requires dipyrromethane as cofactor.

It catalyses the reaction 4 porphobilinogen + H2O = hydroxymethylbilane + 4 NH4(+). The protein operates within porphyrin-containing compound metabolism; protoporphyrin-IX biosynthesis; coproporphyrinogen-III from 5-aminolevulinate: step 2/4. Its function is as follows. Tetrapolymerization of the monopyrrole PBG into the hydroxymethylbilane pre-uroporphyrinogen in several discrete steps. The polypeptide is Porphobilinogen deaminase (Escherichia coli O45:K1 (strain S88 / ExPEC)).